The sequence spans 113 residues: Endoribonuclease SymE (113 aa).

One can recognise a SpoVT-AbrB domain in the interval 29 to 74 (SRYPDYSRIPAITLKGQWLEAAGFATGTAIDVKVMEGCIVLTAQPP).

The protein belongs to the SymE family.

The protein resides in the cytoplasm. Functionally, involved in the degradation and recycling of damaged RNA. It is itself a target for degradation by the ATP-dependent protease Lon. In Escherichia coli O1:K1 / APEC, this protein is Endoribonuclease SymE.